We begin with the raw amino-acid sequence, 201 residues long: FMN-dependent NADH:quinone oxidoreductase (201 aa).

FMN-binding positions include Ser-10, 16–18 (SQS), 95–98 (MYNF), and 139–142 (TTGG).

Belongs to the azoreductase type 1 family. Homodimer. FMN serves as cofactor.

It carries out the reaction 2 a quinone + NADH + H(+) = 2 a 1,4-benzosemiquinone + NAD(+). The catalysed reaction is N,N-dimethyl-1,4-phenylenediamine + anthranilate + 2 NAD(+) = 2-(4-dimethylaminophenyl)diazenylbenzoate + 2 NADH + 2 H(+). Functionally, quinone reductase that provides resistance to thiol-specific stress caused by electrophilic quinones. Its function is as follows. Also exhibits azoreductase activity. Catalyzes the reductive cleavage of the azo bond in aromatic azo compounds to the corresponding amines. In Tolumonas auensis (strain DSM 9187 / NBRC 110442 / TA 4), this protein is FMN-dependent NADH:quinone oxidoreductase.